The chain runs to 206 residues: 2,3-bisphosphoglycerate-dependent phosphoglycerate mutase (206 aa).

Substrate contacts are provided by residues 9–16 (RHGQSEWN), 22–23 (TG), arginine 61, 88–91 (ERDY), lysine 99, 115–116 (RR), and 159–160 (GN). Residue histidine 10 is the Tele-phosphohistidine intermediate of the active site. Glutamate 88 functions as the Proton donor/acceptor in the catalytic mechanism.

This sequence belongs to the phosphoglycerate mutase family. BPG-dependent PGAM subfamily. As to quaternary structure, homodimer.

The enzyme catalyses (2R)-2-phosphoglycerate = (2R)-3-phosphoglycerate. The protein operates within carbohydrate degradation; glycolysis; pyruvate from D-glyceraldehyde 3-phosphate: step 3/5. In terms of biological role, catalyzes the interconversion of 2-phosphoglycerate and 3-phosphoglycerate. This Brucella anthropi (strain ATCC 49188 / DSM 6882 / CCUG 24695 / JCM 21032 / LMG 3331 / NBRC 15819 / NCTC 12168 / Alc 37) (Ochrobactrum anthropi) protein is 2,3-bisphosphoglycerate-dependent phosphoglycerate mutase.